The following is a 259-amino-acid chain: Adenylosuccinate synthetase (259 aa).

GTP-binding positions include 3 to 9 (GDEGKGK) and 31 to 33 (GHT). Asp4 (proton acceptor) is an active-site residue. Residues Asp4 and Gly31 each contribute to the Mg(2+) site. Position 4 to 7 (4 to 7 (DEGK)) interacts with IMP. The active-site Proton donor is the His32. IMP-binding residues include Thr120, Arg134, Gln215, and Thr230.

The protein belongs to the adenylosuccinate synthetase family. Homodimer. Mg(2+) serves as cofactor.

It is found in the cytoplasm. It catalyses the reaction IMP + L-aspartate + GTP = N(6)-(1,2-dicarboxyethyl)-AMP + GDP + phosphate + 2 H(+). The protein operates within purine metabolism; AMP biosynthesis via de novo pathway; AMP from IMP: step 1/2. Functionally, plays an important role in the de novo pathway of purine nucleotide biosynthesis. Catalyzes the first committed step in the biosynthesis of AMP from IMP. In Aggregatibacter actinomycetemcomitans (Actinobacillus actinomycetemcomitans), this protein is Adenylosuccinate synthetase.